A 205-amino-acid polypeptide reads, in one-letter code: Thymidine kinase (205 aa).

ATP is bound by residues 9–16 and 87–90; these read SAMNAGKS and DESQ. Residue E88 is the Proton acceptor of the active site. 4 residues coordinate Zn(2+): C145, C147, C182, and H185.

This sequence belongs to the thymidine kinase family. As to quaternary structure, homotetramer.

The protein localises to the cytoplasm. It carries out the reaction thymidine + ATP = dTMP + ADP + H(+). The protein is Thymidine kinase of Salmonella paratyphi A (strain ATCC 9150 / SARB42).